We begin with the raw amino-acid sequence, 21 residues long: AKTGILDSDGPTVAGNSLSGT.

The segment at 1–21 (AKTGILDSDGPTVAGNSLSGT) is disordered.

It is found in the secreted. The protein localises to the nematocyst. In terms of biological role, injection into mice produces severe neurotoxic effects such as circular movements, aggressive behavior, dyspnea, tonic-clonic convulsion and death. The polypeptide is Granulitoxin (Bunodosoma cangicum (Sea anemone)).